The sequence spans 604 residues: Numb-like protein (604 aa).

Disordered regions lie at residues 1–68 (MSRS…QWQA), 223–283 (GSFR…PVAA), 372–457 (ASAG…TLQP), and 531–604 (KAGA…EIEL). Residues 74 to 225 (RKGTCSFPVR…RTSFAREGSF (152 aa)) form the PID domain. A phosphoserine mark is found at Ser-224 and Ser-228. The span at 233-245 (PAEREAGDKKKAE) shows a compositional bias: basic and acidic residues. Low complexity predominate over residues 246–260 (AAAAPAVAPGPAQPG). At Ser-263 the chain carries Phosphoserine. Thr-279 is modified (phosphothreonine). Positions 409 to 418 (TPSEAERWLE) are enriched in basic and acidic residues. A Phosphoserine modification is found at Ser-411. Low complexity-rich tracts occupy residues 427–441 (QQQQQQQQQQQQQQQ) and 542–552 (SAPGGQARPRP). Residues 553–568 (NGAPWPPEPAPAPAPE) show a composition bias toward pro residues.

In terms of assembly, interacts (via PTB domain) with MAP3K7IP2 (via C-terminal). Interacts (via C-terminal) with TRAF6 (via TRAF domains). Associates with EPS15 and NOTCH1. In terms of tissue distribution, preferentially expressed in the nervous system. In the developing neocortex, expressed in postmitotic neurons in the cortical plate but not in progenitors within the ventricular zone.

It localises to the cytoplasm. In terms of biological role, plays a role in the process of neurogenesis. Required throughout embryonic neurogenesis to maintain neural progenitor cells, also called radial glial cells (RGCs), by allowing their daughter cells to choose progenitor over neuronal cell fate. Not required for the proliferation of neural progenitor cells before the onset of embryonic neurogenesis. Also required postnatally in the subventricular zone (SVZ) neurogenesis by regulating SVZ neuroblasts survival and ependymal wall integrity. Negative regulator of NF-kappa-B signaling pathway. The inhibition of NF-kappa-B activation is mediated at least in part, by preventing MAP3K7IP2 to interact with polyubiquitin chains of TRAF6 and RIPK1 and by stimulating the 'Lys-48'-linked polyubiquitination and degradation of TRAF6 in cortical neurons. This is Numb-like protein (Numbl) from Mus musculus (Mouse).